A 55-amino-acid chain; its full sequence is Large ribosomal subunit protein bL33 (55 aa).

The protein belongs to the bacterial ribosomal protein bL33 family.

The chain is Large ribosomal subunit protein bL33 from Buchnera aphidicola subsp. Baizongia pistaciae (strain Bp).